The following is a 148-amino-acid chain: Transcriptional regulator MraZ (148 aa).

2 consecutive SpoVT-AbrB domains span residues 5–51 and 80–123; these read VATV…PLPE and AHDI…NEAR.

It belongs to the MraZ family. As to quaternary structure, forms oligomers.

Its subcellular location is the cytoplasm. It is found in the nucleoid. This Thiobacillus denitrificans (strain ATCC 25259 / T1) protein is Transcriptional regulator MraZ.